The following is a 371-amino-acid chain: 3-isopropylmalate dehydrogenase B (371 aa).

79–93 (GSKVDHIRRGLDGPE) serves as a coordination point for NAD(+). Substrate is bound by residues Arg100, Arg110, Arg142, and Asp229. Residues Asp229, Asp254, and Asp258 each coordinate Mg(2+). 296-308 (GSAPTIAGKNIAN) is a binding site for NAD(+).

This sequence belongs to the isocitrate and isopropylmalate dehydrogenases family. Homodimer. Mg(2+) is required as a cofactor. Mn(2+) serves as cofactor.

The protein resides in the cytoplasm. The enzyme catalyses (2R,3S)-3-isopropylmalate + NAD(+) = 4-methyl-2-oxopentanoate + CO2 + NADH. It participates in amino-acid biosynthesis; L-leucine biosynthesis; L-leucine from 3-methyl-2-oxobutanoate: step 3/4. In terms of biological role, catalyzes the oxidation of 3-carboxy-2-hydroxy-4-methylpentanoate (3-isopropylmalate) to 3-carboxy-4-methyl-2-oxopentanoate. The product decarboxylates to 4-methyl-2 oxopentanoate. The sequence is that of 3-isopropylmalate dehydrogenase B (leu2B) from Aspergillus niger.